A 106-amino-acid polypeptide reads, in one-letter code: Biogenesis of lysosome-related organelles complex 1 subunit BLS1 (106 aa).

Belongs to the BLOC1S1 family. As to quaternary structure, component of the biogenesis of lysosome-related organelles complex-1 (BLOC-1).

It is found in the endosome. Its function is as follows. Component of the biogenesis of lysosome-related organelles complex-1 (BLOC-1), a complex involved in endosomal cargo sorting. The protein is Biogenesis of lysosome-related organelles complex 1 subunit BLS1 (BLS1) of Candida glabrata (strain ATCC 2001 / BCRC 20586 / JCM 3761 / NBRC 0622 / NRRL Y-65 / CBS 138) (Yeast).